Reading from the N-terminus, the 386-residue chain is S-adenosylmethionine synthase (386 aa).

Residue His17 participates in ATP binding. Asp19 is a binding site for Mg(2+). A K(+)-binding site is contributed by Glu45. Residues Glu58 and Gln101 each contribute to the L-methionine site. The interval 101-111 is flexible loop; the sequence is QSPDISQGVTE. ATP is bound by residues 168-170, Asp242, 248-249, Ala265, and Lys269; these read DAK and RK. Asp242 lines the L-methionine pocket. Lys273 provides a ligand contact to L-methionine.

This sequence belongs to the AdoMet synthase family. As to quaternary structure, homotetramer; dimer of dimers. Mg(2+) is required as a cofactor. It depends on K(+) as a cofactor.

It localises to the cytoplasm. It catalyses the reaction L-methionine + ATP + H2O = S-adenosyl-L-methionine + phosphate + diphosphate. It participates in amino-acid biosynthesis; S-adenosyl-L-methionine biosynthesis; S-adenosyl-L-methionine from L-methionine: step 1/1. Functionally, catalyzes the formation of S-adenosylmethionine (AdoMet) from methionine and ATP. The overall synthetic reaction is composed of two sequential steps, AdoMet formation and the subsequent tripolyphosphate hydrolysis which occurs prior to release of AdoMet from the enzyme. The sequence is that of S-adenosylmethionine synthase from Leptospira interrogans serogroup Icterohaemorrhagiae serovar copenhageni (strain Fiocruz L1-130).